The primary structure comprises 283 residues: 4-diphosphocytidyl-2-C-methyl-D-erythritol kinase (283 aa).

The active site involves lysine 10. 99-109 (PMGGGLGGGSS) contacts ATP. The active site involves aspartate 141.

It belongs to the GHMP kinase family. IspE subfamily. In terms of assembly, homodimer.

It catalyses the reaction 4-CDP-2-C-methyl-D-erythritol + ATP = 4-CDP-2-C-methyl-D-erythritol 2-phosphate + ADP + H(+). Its pathway is isoprenoid biosynthesis; isopentenyl diphosphate biosynthesis via DXP pathway; isopentenyl diphosphate from 1-deoxy-D-xylulose 5-phosphate: step 3/6. Functionally, catalyzes the phosphorylation of the position 2 hydroxy group of 4-diphosphocytidyl-2C-methyl-D-erythritol. This is 4-diphosphocytidyl-2-C-methyl-D-erythritol kinase from Escherichia coli O9:H4 (strain HS).